The following is a 98-amino-acid chain: Large ribosomal subunit protein uL23 (98 aa).

It belongs to the universal ribosomal protein uL23 family. In terms of assembly, part of the 50S ribosomal subunit. Contacts protein L29, and trigger factor when it is bound to the ribosome.

In terms of biological role, one of the early assembly proteins it binds 23S rRNA. One of the proteins that surrounds the polypeptide exit tunnel on the outside of the ribosome. Forms the main docking site for trigger factor binding to the ribosome. This Rickettsia akari (strain Hartford) protein is Large ribosomal subunit protein uL23.